The sequence spans 32 residues: Ranatuerin-2La (32 aa).

Cys-27 and Cys-32 are oxidised to a cystine.

Expressed by the skin glands.

It localises to the secreted. In terms of biological role, antibacterial activity against Gram-positive bacterium S.aureus and Gram-negative bacterium E.coli. Weak activity against C.albicans. In Rana luteiventris (Columbia spotted frog), this protein is Ranatuerin-2La.